The following is a 150-amino-acid chain: uncharacterized protein (150 aa).

The chain crosses the membrane as a helical span at residues 19–39 (SLGMCVILIDGLIVLTAAFVF).

This sequence to B.subtilis YpjC, YqfU and YitT.

It is found in the cell membrane. This is an uncharacterized protein from Bacillus sp. (strain PS3).